The primary structure comprises 175 residues: ATP synthase subunit b (175 aa).

Residues 20-40 (LIFWTAVTFVIVLVILKKIAW) form a helical membrane-spanning segment.

This sequence belongs to the ATPase B chain family. F-type ATPases have 2 components, F(1) - the catalytic core - and F(0) - the membrane proton channel. F(1) has five subunits: alpha(3), beta(3), gamma(1), delta(1), epsilon(1). F(0) has four main subunits: a(1), b(2) and c(10-14). The alpha and beta chains form an alternating ring which encloses part of the gamma chain. F(1) is attached to F(0) by a central stalk formed by the gamma and epsilon chains, while a peripheral stalk is formed by the delta and b chains.

It is found in the cell inner membrane. In terms of biological role, f(1)F(0) ATP synthase produces ATP from ADP in the presence of a proton or sodium gradient. F-type ATPases consist of two structural domains, F(1) containing the extramembraneous catalytic core and F(0) containing the membrane proton channel, linked together by a central stalk and a peripheral stalk. During catalysis, ATP synthesis in the catalytic domain of F(1) is coupled via a rotary mechanism of the central stalk subunits to proton translocation. Its function is as follows. Component of the F(0) channel, it forms part of the peripheral stalk, linking F(1) to F(0). In Chlorobaculum parvum (strain DSM 263 / NCIMB 8327) (Chlorobium vibrioforme subsp. thiosulfatophilum), this protein is ATP synthase subunit b.